The following is a 792-amino-acid chain: Cullin-4 (792 aa).

The span at 1–10 (MSLPTKRSTF) shows a compositional bias: polar residues. The disordered stretch occupies residues 1–43 (MSLPTKRSTFSAASASDDSSYSSPPMKKAKNDLHHSPQHPNTA). A compositionally biased stretch (low complexity) spans 11–23 (SAASASDDSSYSS). Positions 724 to 784 (DRQYQIDAAI…REYLEREKSN (61 aa)) constitute a Cullin neddylation domain. K738 participates in a covalent cross-link: Glycyl lysine isopeptide (Lys-Gly) (interchain with G-Cter in NEDD8).

The protein belongs to the cullin family. In terms of assembly, interacts with COP10, CSN3, CSN4, CSN5, CSN8, DDB1A, DDB1B, DDB2, DET1 and RBX1. In terms of processing, neddylated (rubylated). Deneddylated via its interaction with the COP9 signalosome (CSN) complex. As to expression, ubiquitous.

The protein resides in the nucleus. The protein operates within protein modification; protein ubiquitination. In terms of biological role, component of the CUL4-RBX1-CDD (COP10-DDB1a-DET1) E3 ubiquitin-protein ligase complex which mediates the ubiquitination and subsequent proteasomal degradation of target proteins. Participates in the CDD complex to light-mediated control of development. May repress photomorphogenesis through enhancing COP1 E3 ubiquitin-protein ligase activity. Acts together with the CUL4-DDB1-COP1-SPA E3 ubiquitin-protein ligase complexes in the repression of photomorphogenesis and flowering time. Component ot the CUL4-RBX1-DDB1-PRL1 E3 ubiquitin-protein ligase complex which mediates ubiquitination and subsequent degradation of AKIN10. Component of the CUL4-RBX1-DDB1-DWA1/DWA2 E3 ubiquitin-protein ligase complex that acts as a negative regulator in abscisic acid (ABA) signaling and may target ABI5 for degradation. This chain is Cullin-4 (CUL4), found in Arabidopsis thaliana (Mouse-ear cress).